The primary structure comprises 393 residues: Outer membrane protein assembly factor BamB (393 aa).

Positions Met-1–Gly-19 are cleaved as a signal peptide. The N-palmitoyl cysteine moiety is linked to residue Cys-20. Cys-20 carries S-diacylglycerol cysteine lipidation.

The protein belongs to the BamB family. As to quaternary structure, part of the Bam complex, which is composed of the outer membrane protein BamA, and four lipoproteins BamB, BamC, BamD and BamE.

It localises to the cell outer membrane. Part of the outer membrane protein assembly complex, which is involved in assembly and insertion of beta-barrel proteins into the outer membrane. The polypeptide is Outer membrane protein assembly factor BamB (Yersinia pestis).